The sequence spans 366 residues: Alcohol dehydrogenase (366 aa).

4 residues coordinate Zn(2+): Cys-41, His-62, Glu-63, and Asp-167.

The protein belongs to the zinc-containing alcohol dehydrogenase family. In terms of assembly, homotetramer. Zn(2+) serves as cofactor.

It catalyses the reaction a primary alcohol + NAD(+) = an aldehyde + NADH + H(+). It carries out the reaction a secondary alcohol + NAD(+) = a ketone + NADH + H(+). The enzyme catalyses (R,R)-butane-2,3-diol + NAD(+) = (R)-acetoin + NADH + H(+). The catalysed reaction is an aldehyde + NAD(+) + H2O = a carboxylate + NADH + 2 H(+). Multifunctional alcohol dehydrogenase exhibiting NAD(+)-dependent dehydrogenase activities for 2,3-butanediol, ethanol and acetaldehyde, and reductase activities for acetoin (NADH-dependent), and diacetyl and acetaldehyde (independently of whether NADH or NADPH is the reductant). The rate of oxidation of 2,3-butanediol is much higher than for the oxidation of ethanol. Has acetaldehyde dehydrogenase activity leading to acetate formation. May function in the release of excess reducing power in the absence of exogenous hydrogen acceptors such as oxygen. The polypeptide is Alcohol dehydrogenase (adh) (Cupriavidus necator (Alcaligenes eutrophus)).